Consider the following 153-residue polypeptide: Nucleoside diphosphate kinase (153 aa).

ATP is bound by residues Lys-11, Phe-59, Arg-87, Thr-93, Arg-104, and Asn-114. The Pros-phosphohistidine intermediate role is filled by His-117.

Belongs to the NDK family. Homotrimer. The cofactor is Mg(2+).

It catalyses the reaction a 2'-deoxyribonucleoside 5'-diphosphate + ATP = a 2'-deoxyribonucleoside 5'-triphosphate + ADP. The catalysed reaction is a ribonucleoside 5'-diphosphate + ATP = a ribonucleoside 5'-triphosphate + ADP. Functionally, major role in the synthesis of nucleoside triphosphates other than ATP. The ATP gamma phosphate is transferred to the NDP beta phosphate via a ping-pong mechanism, using a phosphorylated active-site intermediate. This Aspergillus fumigatus (strain ATCC MYA-4609 / CBS 101355 / FGSC A1100 / Af293) (Neosartorya fumigata) protein is Nucleoside diphosphate kinase (ndk1).